The primary structure comprises 150 residues: Putative pre-16S rRNA nuclease (150 aa).

It belongs to the YqgF nuclease family.

It is found in the cytoplasm. Functionally, could be a nuclease involved in processing of the 5'-end of pre-16S rRNA. In Syntrophus aciditrophicus (strain SB), this protein is Putative pre-16S rRNA nuclease.